A 433-amino-acid polypeptide reads, in one-letter code: Homoserine dehydrogenase (433 aa).

NADPH is bound by residues Thr-12, Val-13, and Lys-102. Residue Val-13 coordinates NAD(+). NADP(+) contacts are provided by Val-13 and Lys-102. Na(+) contacts are provided by Glu-126, Val-129, Gly-131, and Ile-133. The NADP(+) site is built by Gly-184 and Glu-187. L-homoserine is bound by residues Glu-187 and Asp-198. Residue Lys-202 is the Proton donor of the active site. Gly-303 serves as a coordination point for NADPH. Gly-303 serves as a coordination point for NAD(+). Gly-303 lines the NADP(+) pocket. Residues 356-433 enclose the ACT domain; it reads YCRFLCADVP…EIPSVIRVLS (78 aa).

The protein belongs to the homoserine dehydrogenase family. A metal cation is required as a cofactor.

The catalysed reaction is L-homoserine + NADP(+) = L-aspartate 4-semialdehyde + NADPH + H(+). The enzyme catalyses L-homoserine + NAD(+) = L-aspartate 4-semialdehyde + NADH + H(+). Its pathway is amino-acid biosynthesis; L-methionine biosynthesis via de novo pathway; L-homoserine from L-aspartate: step 3/3. It participates in amino-acid biosynthesis; L-threonine biosynthesis; L-threonine from L-aspartate: step 3/5. Catalyzes the conversion of L-aspartate-beta-semialdehyde (L-Asa) to L-homoserine (L-Hse), the third step in the biosynthesis of threonine and methionine from aspartate. The chain is Homoserine dehydrogenase (hom) from Synechocystis sp. (strain ATCC 27184 / PCC 6803 / Kazusa).